Consider the following 529-residue polypeptide: Peptide chain release factor 3 (529 aa).

One can recognise a tr-type G domain in the interval 11–280; that stretch reads KKRRTFAIIS…GLVEWAPAPL (270 aa). GTP-binding positions include 20 to 27, 88 to 92, and 142 to 145; these read SHPDAGKT, DTPGH, and NKLD.

It belongs to the TRAFAC class translation factor GTPase superfamily. Classic translation factor GTPase family. PrfC subfamily.

Its subcellular location is the cytoplasm. Functionally, increases the formation of ribosomal termination complexes and stimulates activities of RF-1 and RF-2. It binds guanine nucleotides and has strong preference for UGA stop codons. It may interact directly with the ribosome. The stimulation of RF-1 and RF-2 is significantly reduced by GTP and GDP, but not by GMP. In Alteromonas mediterranea (strain DSM 17117 / CIP 110805 / LMG 28347 / Deep ecotype), this protein is Peptide chain release factor 3.